Consider the following 410-residue polypeptide: Arginine deiminase (410 aa).

C400 (amidino-cysteine intermediate) is an active-site residue.

The protein belongs to the arginine deiminase family.

The protein localises to the cytoplasm. The catalysed reaction is L-arginine + H2O = L-citrulline + NH4(+). It functions in the pathway amino-acid degradation; L-arginine degradation via ADI pathway; carbamoyl phosphate from L-arginine: step 1/2. This Bacillus cereus (strain G9842) protein is Arginine deiminase.